A 350-amino-acid polypeptide reads, in one-letter code: Thioredoxin-like fold domain-containing protein MRL7L, chloroplastic (350 aa).

A chloroplast-targeting transit peptide spans 1–48 (MILPFSTQFTCPVQDNGFSPSSLLSHCKRDRFEVTSLRYDSFGSVKTA). Disordered stretches follow at residues 78–107 (KKEE…LDDP) and 182–201 (NEKK…DSEK). Composition is skewed to acidic residues over residues 82–93 (DSDSEDEEDEVK) and 186–200 (EEED…DDSE).

Its subcellular location is the plastid. The protein resides in the chloroplast stroma. It is found in the nucleus. Its function is as follows. Plays an essential role in early steps of chloroplast development. Involved in the regulation of plastid gene expression. Required for the proper function of the plastid transcriptional machinery and protein accumulation in thylakoid membranes. May function as molecular chaperone to ensure proper organization of the nucleoids in chloroplasts. Is a necessary component of phytochrome signaling for photosynthesis-associated plastid-encoded genes (PhAPGs) activation. Mediates the degradation of two repressors of chloroplast biogenesis, PIF1 and PIF3 in nucleus. Promotes the assembly of the plastid-encoded RNA polymerase (PEP) complex for PhAPG transcription in plastids. The polypeptide is Thioredoxin-like fold domain-containing protein MRL7L, chloroplastic (Arabidopsis thaliana (Mouse-ear cress)).